Consider the following 253-residue polypeptide: Dihydroanticapsin 7-dehydrogenase (253 aa).

Residue 9–31 participates in NAD(+) binding; sequence LITGGASGIGYAAVQAFLGQQAN. A substrate-binding site is contributed by S139. The Proton acceptor role is filled by Y152.

The protein belongs to the short-chain dehydrogenases/reductases (SDR) family.

It catalyses the reaction L-dihydroanticapsin + NAD(+) = L-anticapsin + NADH + H(+). It functions in the pathway antibiotic biosynthesis; bacilysin biosynthesis. In terms of biological role, part of the bacABCDEFG operon responsible for the biosynthesis of bacilysin, an irreversible inactivator of the glutaminase domain of glucosamine synthetase. Catalyzes the dehydrogenation of the C7-hydroxyl group in the 4S-tetrahydrotyrosine (4S-H4Tyr) to yield anticapsin (epoxycyclohexanonyl-Ala). It is not able to oxidize the 4R-H4Tyr diastereomer and the dihydrobacilysin dipeptide (L-Ala-4S-H4Tyr dipeptide). The chain is Dihydroanticapsin 7-dehydrogenase from Bacillus subtilis (strain 168).